A 631-amino-acid chain; its full sequence is Coiled-coil domain-containing protein 93 (631 aa).

Disordered stretches follow at residues 1–23 and 214–243; these read MGLP…DEEQ and QSKM…HEED. The sufficient for interaction with CCDC22 stretch occupies residues 1 to 430; the sequence is MGLPRGPEGQ…LKAERAPRGD (430 aa). Positions 215-225 are enriched in basic and acidic residues; sequence SKMEKAEDKKT. Phosphoserine occurs at positions 298, 301, and 305. Residues 309 to 631 adopt a coiled-coil conformation; that stretch reads LGTSQLHRRK…LLSKVKAKAS (323 aa). Over residues 421–433 the composition is skewed to basic and acidic residues; it reads LKAERAPRGDEKT. Residues 421 to 447 form a disordered region; it reads LKAERAPRGDEKTLSSGEPPGTLTSAM. The tract at residues 448–631 is sufficient for interaction with WASHC2C; the sequence is THDEDLDRRY…LLSKVKAKAS (184 aa).

This sequence belongs to the CCDC93 family. As to quaternary structure, component of the commander complex consisting of the CCC subcomplex and the retriever subcomplex. Component of the CCC (COMMD/CCDC22/CCDC93) subcomplex consisting of COMMD1, COMMD2, COMMD3, COMMD4, COMMD5, COMMD6, COMMD7, COMMD8, COMMD9, COMMD10, CCDC22 and CCDC93. Forms a coiled-coil heterodimer with CCDC22; this heterodimer interacts with the guanine nucleotide exchange factor DENND10; the interaction is direct. Interacts with WASHC1. Interacts directly with WASHC2C. Interacts with SNX17 and SNX31.

It localises to the early endosome. Its function is as follows. Component of the commander complex that is essential for endosomal recycling of transmembrane cargos; the commander complex is composed of composed of the CCC subcomplex and the retriever subcomplex. Component of the CCC complex, which is involved in the regulation of endosomal recycling of surface proteins, including integrins, signaling receptor and channels. The CCC complex associates with SNX17, retriever and WASH complexes to prevent lysosomal degradation and promote cell surface recycling of numerous cargos such as integrins ITGA5:ITGB1. Involved in copper-dependent ATP7A trafficking between the trans-Golgi network and vesicles in the cell periphery; the function is proposed to depend on its association within the CCC complex and cooperation with the WASH complex on early endosomes and is dependent on its interaction with WASHC2C. In terms of biological role, (Microbial infection) The CCC complex, in collaboration with the heterotrimeric retriever complex, mediates the exit of human papillomavirus to the cell surface. In Homo sapiens (Human), this protein is Coiled-coil domain-containing protein 93 (CCDC93).